We begin with the raw amino-acid sequence, 557 residues long: Urease subunit alpha (557 aa).

The Urease domain occupies 130–557 (GFIDTHIHWV…LPLTQLYFIY (428 aa)). Ni(2+) contacts are provided by histidine 135, histidine 137, and lysine 217. Lysine 217 bears the N6-carboxylysine mark. A substrate-binding site is contributed by histidine 219. Positions 246 and 272 each coordinate Ni(2+). Catalysis depends on histidine 320, which acts as the Proton donor. Aspartate 360 lines the Ni(2+) pocket.

This sequence belongs to the metallo-dependent hydrolases superfamily. Urease alpha subunit family. Heterohexamer of 3 UreC (alpha) and 3 UreAB (gamma/beta) subunits. Requires Ni cation as cofactor. In terms of processing, carboxylation allows a single lysine to coordinate two nickel ions.

The protein resides in the cytoplasm. It carries out the reaction urea + 2 H2O + H(+) = hydrogencarbonate + 2 NH4(+). It participates in nitrogen metabolism; urea degradation; CO(2) and NH(3) from urea (urease route): step 1/1. This chain is Urease subunit alpha, found in Sulfurisphaera tokodaii (strain DSM 16993 / JCM 10545 / NBRC 100140 / 7) (Sulfolobus tokodaii).